The following is a 337-amino-acid chain: Visual pigment-like receptor peropsin (337 aa).

Over 1–26 (MLRNNLGNSSDSKNEDGSVFSQTEHN) the chain is Extracellular. Residue Asn8 is glycosylated (N-linked (GlcNAc...) asparagine). A helical membrane pass occupies residues 27-49 (IVATYLIMAGMISIISNIIVLGI). Residues 50–61 (FIKYKELRTPTN) lie on the Cytoplasmic side of the membrane. Residues 62–87 (AIIINLAVTDIGVSSIGYPMSAASDL) traverse the membrane as a helical segment. Residues 88–101 (YGSWKFGYAGCQVY) are Extracellular-facing. Residues Cys98 and Cys175 are joined by a disulfide bond. Residues 102 to 121 (AGLNIFFGMASIGLLTVVAV) traverse the membrane as a helical segment. Over 122–140 (DRYLTICLPDVGRRMTTNT) the chain is Cytoplasmic. A helical transmembrane segment spans residues 141 to 164 (YIGLILGAWINGLFWALMPIIGWA). Residues 165-188 (SYAPDPTGATCTINWRKNDRSFVS) are Extracellular-facing. The helical transmembrane segment at 189 to 212 (YTMTVIAINFIVPLTVMFYCYYHV) threads the bilayer. Over 213 to 240 (TLSIKHHTTSDCTESLNRDWSDQIDVTK) the chain is Cytoplasmic. The chain crosses the membrane as a helical span at residues 241-264 (MSVIMICMFLVAWSPYSIVCLWAS). The Extracellular segment spans residues 265-272 (FGDPKKIP). The helical transmembrane segment at 273–297 (PPMAIIAPLFAKSSTFYNPCIYVVA) threads the bilayer. N6-(retinylidene)lysine is present on Lys284. Over 298-337 (NKKFRRAMLAMFKCQTHQTMPVTSILPMDVSQNPLASGRI) the chain is Cytoplasmic.

This sequence belongs to the G-protein coupled receptor 1 family. Opsin subfamily. In terms of tissue distribution, found only in the eye, where it is localized to the retinal pigment epithelium (RPE). In the RPE, it is localized to the microvilli that surround the photoreceptor outer segments.

The protein localises to the membrane. Its function is as follows. May play a role in rpe physiology either by detecting light directly or by monitoring the concentration of retinoids or other photoreceptor-derived compounds. This is Visual pigment-like receptor peropsin (RRH) from Homo sapiens (Human).